The sequence spans 241 residues: MSLQAFRIGLLSTTAAPLAYARPFSSYAALLAKKKGKTSGKPGKADNEEPIEIIDVKKYVIDATKQFEKTLELHKRKLAEQKVGTASPTIFNDLRVGKEGQKFTELAATSLKGRNALIVTVFDPKDTKNIVSAIMAAGLNLNPERIPNNDQQLKVSLPPITTETRQAVCKDLKKVFEDYKHSALKESLGHVRGEIMKELKHLQKKNDDVKKVIQDVEKIHKEYTIKLQEQLKQAEKSVMNQ.

The protein belongs to the RRF family.

The protein localises to the mitochondrion. Its function is as follows. Necessary for protein synthesis in mitochondria. Functions as a ribosome recycling factor in mitochondria. The sequence is that of Ribosome-recycling factor, mitochondrial (RRF1) from Kluyveromyces lactis (strain ATCC 8585 / CBS 2359 / DSM 70799 / NBRC 1267 / NRRL Y-1140 / WM37) (Yeast).